Reading from the N-terminus, the 345-residue chain is Protein-glutamate methylesterase/protein-glutamine glutaminase 2 (345 aa).

The region spanning 7 to 124 (KVLVVDDSPV…TADMLGYRSL (118 aa)) is the Response regulatory domain. Aspartate 58 bears the 4-aspartylphosphate mark. The region spanning 154–345 (STSQYQLIAI…LPQFLCDLLS (192 aa)) is the CheB-type methylesterase domain. Active-site residues include serine 166, histidine 192, and aspartate 289.

The protein belongs to the CheB family. Phosphorylated by CheA. Phosphorylation of the N-terminal regulatory domain activates the methylesterase activity.

The protein localises to the cytoplasm. The catalysed reaction is [protein]-L-glutamate 5-O-methyl ester + H2O = L-glutamyl-[protein] + methanol + H(+). It catalyses the reaction L-glutaminyl-[protein] + H2O = L-glutamyl-[protein] + NH4(+). Its function is as follows. Involved in chemotaxis. Part of a chemotaxis signal transduction system that modulates chemotaxis in response to various stimuli. Catalyzes the demethylation of specific methylglutamate residues introduced into the chemoreceptors (methyl-accepting chemotaxis proteins or MCP) by CheR. Also mediates the irreversible deamidation of specific glutamine residues to glutamic acid. This is Protein-glutamate methylesterase/protein-glutamine glutaminase 2 from Vibrio vulnificus (strain YJ016).